The following is a 162-amino-acid chain: Phosphopantetheine adenylyltransferase (162 aa).

Position 10 (Thr10) interacts with substrate. ATP is bound by residues 10-11 (TF) and His18. The substrate site is built by Lys42, Leu74, and Arg88. ATP contacts are provided by residues 89-91 (GLR), Glu99, and 124-130 (NSFISST).

The protein belongs to the bacterial CoaD family. Homohexamer. The cofactor is Mg(2+).

Its subcellular location is the cytoplasm. It catalyses the reaction (R)-4'-phosphopantetheine + ATP + H(+) = 3'-dephospho-CoA + diphosphate. It participates in cofactor biosynthesis; coenzyme A biosynthesis; CoA from (R)-pantothenate: step 4/5. Its function is as follows. Reversibly transfers an adenylyl group from ATP to 4'-phosphopantetheine, yielding dephospho-CoA (dPCoA) and pyrophosphate. The polypeptide is Phosphopantetheine adenylyltransferase (Alteromonas mediterranea (strain DSM 17117 / CIP 110805 / LMG 28347 / Deep ecotype)).